The chain runs to 272 residues: Phosphoglycolate phosphatase (272 aa).

The active-site Nucleophile is Asp19. Asp19, Asp21, and Asp182 together coordinate Mg(2+).

Belongs to the HAD-like hydrolase superfamily. CbbY/CbbZ/Gph/YieH family. It depends on Mg(2+) as a cofactor.

It catalyses the reaction 2-phosphoglycolate + H2O = glycolate + phosphate. The protein operates within organic acid metabolism; glycolate biosynthesis; glycolate from 2-phosphoglycolate: step 1/1. Its function is as follows. Specifically catalyzes the dephosphorylation of 2-phosphoglycolate. Is involved in the dissimilation of the intracellular 2-phosphoglycolate formed during the DNA repair of 3'-phosphoglycolate ends, a major class of DNA lesions induced by oxidative stress. This Pseudomonas fluorescens (strain Pf0-1) protein is Phosphoglycolate phosphatase.